The primary structure comprises 427 residues: Dihydroorotase (427 aa).

Residues His57 and His59 each coordinate Zn(2+). Residues 59–61 (HLR) and Asn91 each bind substrate. Zn(2+) is bound by residues Asp149, His176, and His229. A substrate-binding site is contributed by Asn275. Asp302 is a Zn(2+) binding site. Asp302 is an active-site residue. Substrate-binding positions include His306 and 320–321 (FG).

It belongs to the metallo-dependent hydrolases superfamily. DHOase family. Class I DHOase subfamily. Requires Zn(2+) as cofactor.

It carries out the reaction (S)-dihydroorotate + H2O = N-carbamoyl-L-aspartate + H(+). It participates in pyrimidine metabolism; UMP biosynthesis via de novo pathway; (S)-dihydroorotate from bicarbonate: step 3/3. Functionally, catalyzes the reversible cyclization of carbamoyl aspartate to dihydroorotate. The protein is Dihydroorotase of Shouchella clausii (strain KSM-K16) (Alkalihalobacillus clausii).